The primary structure comprises 143 residues: NADH-quinone oxidoreductase subunit A (143 aa).

Transmembrane regions (helical) follow at residues 8 to 28 (FGNV…GYLT), 63 to 83 (FYVV…LFPW), and 93 to 113 (FALV…VYAW).

The protein belongs to the complex I subunit 3 family. As to quaternary structure, NDH-1 is composed of 14 different subunits. Subunits NuoA, H, J, K, L, M, N constitute the membrane sector of the complex.

It localises to the cell inner membrane. It catalyses the reaction a quinone + NADH + 5 H(+)(in) = a quinol + NAD(+) + 4 H(+)(out). Functionally, NDH-1 shuttles electrons from NADH, via FMN and iron-sulfur (Fe-S) centers, to quinones in the respiratory chain. The immediate electron acceptor for the enzyme in this species is believed to be a menaquinone. Couples the redox reaction to proton translocation (for every two electrons transferred, four hydrogen ions are translocated across the cytoplasmic membrane), and thus conserves the redox energy in a proton gradient. The sequence is that of NADH-quinone oxidoreductase subunit A from Chlorobium phaeovibrioides (strain DSM 265 / 1930) (Prosthecochloris vibrioformis (strain DSM 265)).